A 215-amino-acid polypeptide reads, in one-letter code: Ribonuclease T (215 aa).

Residues 20–194 form the Exonuclease domain; sequence VVIDVETAGF…YDTLQTAKLF (175 aa). Residues D23, E25, H181, and D186 each contribute to the Mg(2+) site. Residue H181 is the Proton donor/acceptor of the active site.

It belongs to the RNase T family. In terms of assembly, homodimer. The cofactor is Mg(2+).

Its function is as follows. Trims short 3' overhangs of a variety of RNA species, leaving a one or two nucleotide 3' overhang. Responsible for the end-turnover of tRNA: specifically removes the terminal AMP residue from uncharged tRNA (tRNA-C-C-A). Also appears to be involved in tRNA biosynthesis. In Yersinia pseudotuberculosis serotype O:1b (strain IP 31758), this protein is Ribonuclease T.